The chain runs to 326 residues: Alkanal monooxygenase beta chain (326 aa).

This sequence belongs to the bacterial luciferase oxidoreductase family. In terms of assembly, heterodimer of an alpha and a beta chain.

The enzyme catalyses a long-chain fatty aldehyde + FMNH2 + O2 = a long-chain fatty acid + hnu + FMN + H2O + 2 H(+). Light-emitting reaction in luminous bacteria. The specific role of the beta subunit is unknown, but it is absolutely required for bioluminescence activity. This chain is Alkanal monooxygenase beta chain (luxB), found in Photobacterium leiognathi.